Here is a 257-residue protein sequence, read N- to C-terminus: Ras-related protein Rab-26 (257 aa).

The tract at residues 1–53 (MSRKKTPKSKGGSVPAASTLPAAANGPRLAHPRTARPGPEAPPNGPPQSGRPS) is disordered. Residues Ser-73, Gly-74, Val-75, Gly-76, Lys-77, Thr-78, Cys-79, Ser-96, and Thr-97 each contribute to the GTP site. Thr-78 serves as a coordination point for Mg(2+). 2 consecutive short sequence motifs (switch) follow at residues 87 to 102 (GAFLAGTFISTVGIDF) and 120 to 137 (DTAGQERFRSVTHAYYRD). Mg(2+) is bound by residues Thr-97 and Asp-120. The GTP site is built by Gly-123, Asn-178, Lys-179, Asp-181, Ala-209, and Lys-210. 2 S-geranylgeranyl cysteine lipidation sites follow: Cys-254 and Cys-255.

Belongs to the small GTPase superfamily. Rab family. Interacts with ADRA2B. Interacts with RIMS1. The cofactor is Mg(2+). In terms of tissue distribution, expressed in pancreas, kidney, brain, submandibular gland, and lung.

Its subcellular location is the cytoplasmic vesicle. It localises to the secretory vesicle membrane. It is found in the golgi apparatus membrane. The catalysed reaction is GTP + H2O = GDP + phosphate + H(+). Regulated by guanine nucleotide exchange factors (GEFs) which promote the exchange of bound GDP for free GTP. Regulated by GTPase activating proteins (GAPs) which increase the GTP hydrolysis activity. Inhibited by GDP dissociation inhibitors (GDIs). Functionally, the small GTPases Rab are key regulators of intracellular membrane trafficking, from the formation of transport vesicles to their fusion with membranes. Rabs cycle between an inactive GDP-bound form and an active GTP-bound form that is able to recruit to membranes different set of downstream effectors directly responsible for vesicle formation, movement, tethering and fusion. RAB26 mediates transport of ADRA2A and ADRA2B from the Golgi to the cell membrane. Plays a role in the maturation of zymogenic granules and in pepsinogen secretion in the stomach. Plays a role in the secretion of amylase from acinar granules in the parotid gland. The polypeptide is Ras-related protein Rab-26 (Rattus norvegicus (Rat)).